Reading from the N-terminus, the 1129-residue chain is Regulator of nonsense transcripts 1 (1129 aa).

The segment at 1–415 is sufficient for interaction with RENT2; that stretch reads MSVEAYGPSS…LRSSVGAPVE (415 aa). A phosphoserine mark is found at Ser10 and Ser31. The segment at 39–70 is disordered; it reads TLPSQTQTPPGGPGGPGGGGAGGPGGAGAGAA. Residues 52–69 are compositionally biased toward gly residues; it reads GGPGGGGAGGPGGAGAGA. The 158-residue stretch at 115-272 folds into the Upf1 CH-rich domain; that stretch reads TKDLPIHACS…NKLEELWKEN (158 aa). Zn(2+)-binding residues include Cys123, Cys126, Cys137, Ser140, Cys145, His155, His159, Cys165, Cys183, Cys186, Cys209, and Cys213. The segment at 123–155 is C3H; that stretch reads CSYCGIHDPACVVYCNTSKKWFCNGRGNTSGSH. Residues 137–165 form a CC/SHH/C region; that stretch reads CNTSKKWFCNGRGNTSGSHIVNHLVRAKC. The tract at residues 183 to 213 is C4; it reads CYNCGCRNVFLLGFIPAKADSVVVLLCRQPC. ATP-binding positions include Gln486 and 506–510; that span reads GTGKT. Phosphoserine is present on Ser565. ATP is bound by residues Gln676, Tyr713, and Glu844. Ser956 is subject to Phosphoserine. Disordered regions lie at residues 1009-1058 and 1073-1096; these read FGQA…VASQ and SQPS…YLGD. Position 1019 is an omega-N-methylarginine (Arg1019). Over residues 1025 to 1034 the composition is skewed to basic residues; that stretch reads KTGRGGRQKN. Residues 1041–1058 are compositionally biased toward polar residues; the sequence is PSQTNLPNSQASQDVASQ. Over residues 1073-1086 the composition is skewed to low complexity; the sequence is SQPSQMSQPGLSQP. 4 positions are modified to phosphoserine: Ser1089, Ser1107, Ser1110, and Ser1127. 2 short sequence motifs ([ST]-Q motif) span residues 1089–1090 and 1107–1108; these read SQ. A disordered region spans residues 1110-1129; it reads STYQGERAYQHGGVTGLSQY.

It belongs to the DNA2/NAM7 helicase family. As to quaternary structure, found in a post-splicing messenger ribonucleoprotein (mRNP) complex. Associates with the exon junction complex (EJC). Associates with the SGM1C complex; is phosphorylated by the complex kinase component SGM1. Part of a complex composed of SMG1, DHX34 and UPF1; within the complex DHX34 acts as a scaffolding protein to facilitate SMG1 phosphorylation of UPF1. Interacts with UPF2. Interacts with UPF3A and UPF3B. Interacts with EST1A. Interacts with SLBP. Interacts (when hyperphosphorylated) with PNRC2. Interacts with AGO1 and AGO2. Interacts with GSPT2. Interacts with isoform 1 and isoform 5 of ADAR/ADAR1. Interacts with SMG7. Interacts with ZC3H12A; this interaction occurs in a mRNA translationally active- and termination-dependent manner and is essential for ZC3H12A-mediated degradation of target mRNAs. Interacts with CPSF6. Interacts with MOV10; the interaction is direct and RNA-dependent. Interacts with SHFL; the interaction increases in the presence of RNA. Interacts with UPF2 and DDX4; interactions are mediated by TDRD6. Interacts with DHX34 and PABPC1/PABP1; the interactions are RNA-independent. Interacts with RBM46. (Microbial infection) Interacts with human T-cell leukemia virus 1/HTLV-1 protein Tax; this interaction inhibits the host nonsense-mediated mRNA decay (NMD). Post-translationally, phosphorylated by SMG1; required for formation of mRNA surveillance complexes. In terms of tissue distribution, ubiquitous.

It is found in the cytoplasm. The protein localises to the P-body. The protein resides in the nucleus. It localises to the perinuclear region. It catalyses the reaction ATP + H2O = ADP + phosphate + H(+). Functionally, RNA-dependent helicase required for nonsense-mediated decay (NMD) of aberrant mRNAs containing premature stop codons and modulates the expression level of normal mRNAs. Is recruited to mRNAs upon translation termination and undergoes a cycle of phosphorylation and dephosphorylation; its phosphorylation appears to be a key step in NMD. Recruited by release factors to stalled ribosomes together with the SMG1C protein kinase complex to form the transient SURF (SMG1-UPF1-eRF1-eRF3) complex. In EJC-dependent NMD, the SURF complex associates with the exon junction complex (EJC) (located 50-55 or more nucleotides downstream from the termination codon) through UPF2 and allows the formation of an UPF1-UPF2-UPF3 surveillance complex which is believed to activate NMD. Phosphorylated UPF1 is recognized by EST1B/SMG5, SMG6 and SMG7 which are thought to provide a link to the mRNA degradation machinery involving exonucleolytic and endonucleolytic pathways, and to serve as adapters to protein phosphatase 2A (PP2A), thereby triggering UPF1 dephosphorylation and allowing the recycling of NMD factors. UPF1 can also activate NMD without UPF2 or UPF3, and in the absence of the NMD-enhancing downstream EJC indicative for alternative NMD pathways. Plays a role in replication-dependent histone mRNA degradation at the end of phase S; the function is independent of UPF2. For the recognition of premature termination codons (PTC) and initiation of NMD a competitive interaction between UPF1 and PABPC1 with the ribosome-bound release factors is proposed. The ATPase activity of UPF1 is required for disassembly of mRNPs undergoing NMD. Together with UPF2 and dependent on TDRD6, mediates the degradation of mRNA harboring long 3'UTR by inducing the NMD machinery. Also capable of unwinding double-stranded DNA and translocating on single-stranded DNA. In Homo sapiens (Human), this protein is Regulator of nonsense transcripts 1.